We begin with the raw amino-acid sequence, 209 residues long: Ubiquitin-conjugating enzyme E2 S (209 aa).

Residues 14-160 (QTIRQVMREL…ARMMTEIHAQ (147 aa)) enclose the UBC core domain. C98 serves as the catalytic Glycyl thioester intermediate. The segment at 162–209 (AKCGAGAHGDDKDDDGPSTKKHAGLDKKLQDKKKEKLLKEKKRMLKRL) is disordered. The span at 169–199 (HGDDKDDDGPSTKKHAGLDKKLQDKKKEKLL) shows a compositional bias: basic and acidic residues. A compositionally biased stretch (basic residues) spans 200-209 (KEKKRMLKRL).

Belongs to the ubiquitin-conjugating enzyme family.

The enzyme catalyses S-ubiquitinyl-[E1 ubiquitin-activating enzyme]-L-cysteine + [E2 ubiquitin-conjugating enzyme]-L-cysteine = [E1 ubiquitin-activating enzyme]-L-cysteine + S-ubiquitinyl-[E2 ubiquitin-conjugating enzyme]-L-cysteine.. It functions in the pathway protein modification; protein ubiquitination. Functionally, catalyzes the covalent attachment of ubiquitin to other proteins. Acts as an essential factor of the anaphase promoting complex/cyclosome (APC/C), a cell cycle-regulated ubiquitin ligase that controls progression through mitosis. Acts by specifically elongating polyubiquitin chains initiated by the E2 enzyme vih/UbcH10 on APC/C substrates, enhancing the degradation of APC/C substrates by the proteasome and promoting mitotic exit. In Drosophila erecta (Fruit fly), this protein is Ubiquitin-conjugating enzyme E2 S.